The sequence spans 697 residues: Tryptophan synthase (697 aa).

The segment at 1–298 is tryptophan synthase alpha chain; it reads MTEQIKKTFL…AVVEPINEMY (298 aa). Catalysis depends on proton acceptor residues Glu-50 and Asp-61. Positions 298–697 are tryptophan synthase beta chain; that stretch reads YLPQKYGMFG…GPKIGWDLRF (400 aa). Lys-381 carries the post-translational modification N6-(pyridoxal phosphate)lysine.

In the N-terminal section; belongs to the TrpA family. The protein in the C-terminal section; belongs to the TrpB family. Requires pyridoxal 5'-phosphate as cofactor.

It carries out the reaction (1S,2R)-1-C-(indol-3-yl)glycerol 3-phosphate + L-serine = D-glyceraldehyde 3-phosphate + L-tryptophan + H2O. Its pathway is amino-acid biosynthesis; L-tryptophan biosynthesis; L-tryptophan from chorismate: step 5/5. This chain is Tryptophan synthase (trp2), found in Schizosaccharomyces pombe (strain 972 / ATCC 24843) (Fission yeast).